The primary structure comprises 414 residues: COUP transcription factor 2 (414 aa).

A disordered region spans residues 1–72; it reads MAMVVSTWRD…PGGPGSDKQQ (72 aa). Residues 27–37 show a composition bias toward pro residues; that stretch reads PPVPGPPPGAP. Positions 38–57 are enriched in low complexity; sequence HTPQTPGQGGPASTPAQTAA. Threonine 51 is subject to Phosphothreonine. Residues 58-67 show a composition bias toward gly residues; it reads GGQGGPGGPG. Positions 76–151 form a DNA-binding region, nuclear receptor; that stretch reads HIECVVCGDK…VGMRREAVQR (76 aa). 2 NR C4-type zinc fingers span residues 79-99 and 115-139; these read CVVC…CEGC and CRAN…LKKC. The segment at 117–414 is interaction with ZFPM2; that stretch reads ANRNCPIDQH…SFNWPYMAIQ (298 aa). The NR LBD domain occupies 177–403; the sequence is YLSGYISLLL…TLIRDMLLSG (227 aa). The tract at residues 337-414 is important for dimerization; that stretch reads LQEKSQCALE…SFNWPYMAIQ (78 aa).

Belongs to the nuclear hormone receptor family. NR2 subfamily. Interacts with SQSTM1. Binds DNA as a dimer; homodimer or heterodimer with NR2F6. Interacts with NCOA1, NCOA2, NCOA3 and PPARGC1A. Interacts with ZFPM2. In terms of tissue distribution, ubiquitous. Expressed in the stromal cells of developing fetal ovaries.

The protein localises to the nucleus. Functionally, ligand-activated transcription factor. Activated by high concentrations of 9-cis-retinoic acid and all-trans-retinoic acid, but not by dexamethasone, cortisol or progesterone (in vitro). Regulation of the apolipoprotein A-I gene transcription. Binds to DNA site A. May be required to establish ovary identity during early gonad development. The sequence is that of COUP transcription factor 2 (NR2F2) from Homo sapiens (Human).